We begin with the raw amino-acid sequence, 82 residues long: RNA-binding protein Hfq (82 aa).

The Sm domain occupies 11–71 (DTFLNSVRKS…ISTIMPAQPV (61 aa)).

This sequence belongs to the Hfq family. Homohexamer.

Functionally, RNA chaperone that binds small regulatory RNA (sRNAs) and mRNAs to facilitate mRNA translational regulation in response to envelope stress, environmental stress and changes in metabolite concentrations. Also binds with high specificity to tRNAs. This Caulobacter vibrioides (strain ATCC 19089 / CIP 103742 / CB 15) (Caulobacter crescentus) protein is RNA-binding protein Hfq.